Consider the following 158-residue polypeptide: Endoribonuclease YbeY (158 aa).

Residues His117, His121, and His127 each contribute to the Zn(2+) site.

It belongs to the endoribonuclease YbeY family. The cofactor is Zn(2+).

Its subcellular location is the cytoplasm. Functionally, single strand-specific metallo-endoribonuclease involved in late-stage 70S ribosome quality control and in maturation of the 3' terminus of the 16S rRNA. The polypeptide is Endoribonuclease YbeY (Francisella philomiragia subsp. philomiragia (strain ATCC 25017 / CCUG 19701 / FSC 153 / O#319-036)).